The following is a 390-amino-acid chain: Protein phosphatase 1B (390 aa).

Basic and acidic residues predominate over residues 1–14 (MGAFLDKPKTEKHN). The disordered stretch occupies residues 1–20 (MGAFLDKPKTEKHNAHGAGN). Residue glycine 2 is the site of N-myristoyl glycine attachment. A Glycyl lysine isopeptide (Lys-Gly) (interchain with G-Cter in ISG15) cross-link involves residue lysine 12. Positions 23–295 (RYGLSSMQGW…DNMSIVLVCF (273 aa)) constitute a PPM-type phosphatase domain. Aspartate 60, glycine 61, aspartate 243, and aspartate 286 together coordinate Mn(2+). The tract at residues 371–390 (NPNKDNDGGAGDLEDSLVAL) is disordered. Position 386 is a phosphoserine (serine 386).

This sequence belongs to the PP2C family. In terms of assembly, monomer. Interacts with PAK6. Interacts with the phosphorylated form of IKBKB/IKKB. The cofactor is Mg(2+). It depends on Mn(2+) as a cofactor. In terms of processing, isgylation negatively regulates its activity. Post-translationally, N-myristoylation is essential for the recognition of its substrates for dephosphorylation.

It localises to the cytoplasm. Its subcellular location is the cytosol. The protein localises to the membrane. The catalysed reaction is O-phospho-L-seryl-[protein] + H2O = L-seryl-[protein] + phosphate. It carries out the reaction O-phospho-L-threonyl-[protein] + H2O = L-threonyl-[protein] + phosphate. In terms of biological role, enzyme with a broad specificity. Dephosphorylates PRKAA1 and PRKAA2. Inhibits TBK1-mediated antiviral signaling by dephosphorylating it at 'Ser-172'. Plays an important role in the termination of TNF-alpha-mediated NF-kappa-B activation through dephosphorylating and inactivating IKBKB/IKKB. The sequence is that of Protein phosphatase 1B (Ppm1b) from Rattus norvegicus (Rat).